Here is a 299-residue protein sequence, read N- to C-terminus: Taste receptor type 2 member 4 (299 aa).

Over 1–9 the chain is Extracellular; the sequence is MLQLFYFSA. A helical transmembrane segment spans residues 10–30; that stretch reads IIASVILNFVGIIMNLFIMVV. Over 31-46 the chain is Cytoplasmic; that stretch reads NCKTWVKSHRISSSDR. A helical transmembrane segment spans residues 47–67; sequence ILFSLGITRFLMLGLFLVNTI. At 68–81 the chain is on the extracellular side; the sequence is FFVSSNTERSVYLS. Residues 82–102 traverse the membrane as a helical segment; the sequence is AFFVLCFMFXDSSSLWFVTLL. Residues 103 to 131 lie on the Cytoplasmic side of the membrane; sequence NILYCVKITNFQHSVFLLLKQNISPKIPR. The chain crosses the membrane as a helical span at residues 132–152; that stretch reads LLLACVLISAFTTCLYITLSQ. Over 153 to 172 the chain is Extracellular; the sequence is ASPFPELVTKRNNTSFNTHE. 2 N-linked (GlcNAc...) asparagine glycosylation sites follow: Asn-164 and Asn-165. The chain crosses the membrane as a helical span at residues 173–193; the sequence is GILSLVVSLVLSSSLQFIINV. Residues 194-230 are Cytoplasmic-facing; the sequence is TSASLLIHSLRRHIQKMQKNATGFWNPQTEAHVGAMK. Residues 231–251 traverse the membrane as a helical segment; that stretch reads LMIYFLILYIPYSVATLVQYL. Residues 252-262 are Extracellular-facing; sequence PFYVGMDMGTK. Residues 263–283 form a helical membrane-spanning segment; that stretch reads AICLIFATLYSPGHSVLIIIT. Residues 284 to 299 are Cytoplasmic-facing; it reads HPKLKTTAKKILCFKK.

The protein belongs to the G-protein coupled receptor T2R family.

It is found in the membrane. It localises to the cell projection. The protein localises to the cilium membrane. Functionally, gustducin-coupled receptor implicated in the perception of bitter compounds in the oral cavity and the gastrointestinal tract. Signals through PLCB2 and the calcium-regulated cation channel TRPM5. In airway epithelial cells, binding of denatonium increases the intracellular calcium ion concentration and stimulates ciliary beat frequency. The chain is Taste receptor type 2 member 4 (TAS2R4) from Pongo pygmaeus (Bornean orangutan).